Consider the following 338-residue polypeptide: Glyceraldehyde-3-phosphate dehydrogenase, cytosolic (338 aa).

Residues 14 to 15 (RI), Asp36, and Arg83 contribute to the NAD(+) site. Residues 154–156 (SCT), Thr185, 214–215 (TG), and Arg237 each bind D-glyceraldehyde 3-phosphate. Cys155 acts as the Nucleophile in catalysis. Asn319 contacts NAD(+).

This sequence belongs to the glyceraldehyde-3-phosphate dehydrogenase family. In terms of assembly, homotetramer.

It localises to the cytoplasm. It catalyses the reaction D-glyceraldehyde 3-phosphate + phosphate + NAD(+) = (2R)-3-phospho-glyceroyl phosphate + NADH + H(+). The protein operates within carbohydrate degradation; glycolysis; pyruvate from D-glyceraldehyde 3-phosphate: step 1/5. Its function is as follows. Key enzyme in glycolysis that catalyzes the first step of the pathway by converting D-glyceraldehyde 3-phosphate (G3P) into 3-phospho-D-glyceroyl phosphate. Essential for the maintenance of cellular ATP levels and carbohydrate metabolism. The polypeptide is Glyceraldehyde-3-phosphate dehydrogenase, cytosolic (GAPC) (Ranunculus acris (Meadow buttercup)).